The sequence spans 222 residues: 7-cyano-7-deazaguanine synthase (222 aa).

14 to 24 (FSGGQDSTTCL) is a binding site for ATP. Positions 190, 199, 202, and 205 each coordinate Zn(2+).

The protein belongs to the QueC family. Homodimer. The cofactor is Zn(2+).

It catalyses the reaction 7-carboxy-7-deazaguanine + NH4(+) + ATP = 7-cyano-7-deazaguanine + ADP + phosphate + H2O + H(+). Its pathway is purine metabolism; 7-cyano-7-deazaguanine biosynthesis. Functionally, catalyzes the ATP-dependent conversion of 7-carboxy-7-deazaguanine (CDG) to 7-cyano-7-deazaguanine (preQ(0)). The sequence is that of 7-cyano-7-deazaguanine synthase from Staphylococcus aureus (strain Mu3 / ATCC 700698).